A 248-amino-acid chain; its full sequence is 4-hydroxy-tetrahydrodipicolinate reductase (248 aa).

NAD(+)-binding positions include 9–14 (GAKGRV), 77–79 (GTT), and 104–107 (APNF). H134 functions as the Proton donor/acceptor in the catalytic mechanism. Residue H135 coordinates (S)-2,3,4,5-tetrahydrodipicolinate. K138 serves as the catalytic Proton donor. 144–145 (GT) lines the (S)-2,3,4,5-tetrahydrodipicolinate pocket.

This sequence belongs to the DapB family.

It localises to the cytoplasm. It catalyses the reaction (S)-2,3,4,5-tetrahydrodipicolinate + NAD(+) + H2O = (2S,4S)-4-hydroxy-2,3,4,5-tetrahydrodipicolinate + NADH + H(+). The enzyme catalyses (S)-2,3,4,5-tetrahydrodipicolinate + NADP(+) + H2O = (2S,4S)-4-hydroxy-2,3,4,5-tetrahydrodipicolinate + NADPH + H(+). It participates in amino-acid biosynthesis; L-lysine biosynthesis via DAP pathway; (S)-tetrahydrodipicolinate from L-aspartate: step 4/4. Catalyzes the conversion of 4-hydroxy-tetrahydrodipicolinate (HTPA) to tetrahydrodipicolinate. The sequence is that of 4-hydroxy-tetrahydrodipicolinate reductase from Corynebacterium glutamicum (strain ATCC 13032 / DSM 20300 / JCM 1318 / BCRC 11384 / CCUG 27702 / LMG 3730 / NBRC 12168 / NCIMB 10025 / NRRL B-2784 / 534).